Reading from the N-terminus, the 499-residue chain is Probable UTP--glucose-1-phosphate uridylyltransferase (499 aa).

UTP contacts are provided by residues Leu-108 to Gly-111, Lys-122, Gln-185, and Gly-214. Gly-110–Gly-111 provides a ligand contact to substrate. Residues His-215 and Asn-243–Asp-245 contribute to the substrate site. The UTP site is built by Asp-245 and Lys-387.

This sequence belongs to the UDPGP type 1 family.

It localises to the cytoplasm. The protein localises to the nucleus. It carries out the reaction alpha-D-glucose 1-phosphate + UTP + H(+) = UDP-alpha-D-glucose + diphosphate. Functionally, plays a central role as a glucosyl donor in cellular metabolic pathways. The protein is Probable UTP--glucose-1-phosphate uridylyltransferase of Schizosaccharomyces pombe (strain 972 / ATCC 24843) (Fission yeast).